A 178-amino-acid polypeptide reads, in one-letter code: GTP-dependent dephospho-CoA kinase (178 aa).

GTP contacts are provided by D43, I44, V45, D62, K64, and E120.

This sequence belongs to the GTP-dependent DPCK family.

It catalyses the reaction 3'-dephospho-CoA + GTP = GDP + CoA + H(+). Its pathway is cofactor biosynthesis; coenzyme A biosynthesis. Functionally, catalyzes the GTP-dependent phosphorylation of the 3'-hydroxyl group of dephosphocoenzyme A to form coenzyme A (CoA). In Natronomonas pharaonis (strain ATCC 35678 / DSM 2160 / CIP 103997 / JCM 8858 / NBRC 14720 / NCIMB 2260 / Gabara) (Halobacterium pharaonis), this protein is GTP-dependent dephospho-CoA kinase.